We begin with the raw amino-acid sequence, 516 residues long: Facilitated glucose transporter homolog (516 aa).

The disordered stretch occupies residues 1–37 (MNAVVASQNKNDRSFSNMESESSSNVEKSEKENHHQS). At 1 to 47 (MNAVVASQNKNDRSFSNMESESSSNVEKSEKENHHQSLPDENWTPFL) the chain is on the cytoplasmic side. The span at 14 to 26 (SFSNMESESSSNV) shows a compositional bias: low complexity. A compositionally biased stretch (basic and acidic residues) spans 27 to 37 (EKSEKENHHQS). The helical transmembrane segment at 48 to 68 (FFCISSIALASFQDGFQIGCI) threads the bilayer. Topologically, residues 69-101 (NAPGPLIIDWIKKCHFELFGEVLSQYQADFIWS) are extracellular. The chain crosses the membrane as a helical span at residues 102–122 (VAVSMFSVGGMFGSFCSGFLA). The Cytoplasmic segment spans residues 123–138 (DKFGRKSTLLYNNILA). The chain crosses the membrane as a helical span at residues 139–159 (LLAAVCLSTSKLFNFYPMIVF). The Extracellular segment spans residues 160-161 (GR). Residues 162–182 (FLVGLNCGITSGLVPMFLTEL) form a helical membrane-spanning segment. Over 183–200 (APANLRGKCGSFHQLNIS) the chain is Cytoplasmic. Residues 201–221 (VAIVLSQALGLPQIFGTQVGW) traverse the membrane as a helical segment. A topological domain (extracellular) is located at residue Pro-222. A helical transmembrane segment spans residues 223–243 (YIFACVAIPTFLQLATIPFCV). At 244–306 (ESPKYLISKL…SLFKGDNQWP (63 aa)) the chain is on the cytoplasmic side. The chain crosses the membrane as a helical span at residues 307 to 327 (MIVSILMMFSQQFSGISAVTF). The Extracellular portion of the chain corresponds to 328–344 (YSTLIFKRNGLSGNEPM). A helical transmembrane segment spans residues 345–365 (YATVGFGCIKLIATFGCLFLI). Over 366 to 376 (DHPKFGRKRLH) the chain is Cytoplasmic. A helical transmembrane segment spans residues 377–397 (IAGLSGMCISSILIVITLTLS). At 398-409 (NAGYHWASYMNV) the chain is on the extracellular side. The chain crosses the membrane as a helical span at residues 410–430 (LFILSFVVTFAFGPGPIPWFF). Residues 431 to 444 (TSELFDSATRGRAA) are Cytoplasmic-facing. A helical transmembrane segment spans residues 445-465 (AVSATSNWVANWMVGLTFLPI). Residues 466–471 (NNIIHQ) lie on the Extracellular side of the membrane. The chain crosses the membrane as a helical span at residues 472–492 (YAFLMFTFFTFTFAIFTWKFV). Residues 493-516 (PETKGKSPSAIRKELAFMRKRICS) are Cytoplasmic-facing.

Belongs to the major facilitator superfamily. Sugar transporter (TC 2.A.1.1) family. As to expression, expressed in seam cells from the early embryonic stage through the L2 stage (at protein level).

It is found in the cell membrane. In terms of biological role, appears to have no transport activity for glucose. The chain is Facilitated glucose transporter homolog from Caenorhabditis elegans.